We begin with the raw amino-acid sequence, 675 residues long: MQRKDALKEIARLRDELNRHNYRYYVLAQPEISDYAFDQELERLIALEKAFPDLVTPDSPSQRVGGEITKEFPTVTHRQPMRSLSNTYSLEEVEEFYARVLKLLPEEAGENPEFVAELKFDGVAVSLLYRDGFLVQGATRGNGVEGDDITPNIRTIGSVPLQLRGGAAMAAEQYGGREIEVRGEVFMRKDDFAALNEGRPEEEQFANPRNATAGTLKLQDSAEVARRKMMFVAYYLTDPQCRSMQHVQRLQRLEEMGFYTGGHYSTCRSFDEIRDFIGRWEVDRLTLQYDIDGIVLKLNNPAFWDELGATSKSPRWAIAYKYPAEQAETVLNDVVFQVGRLGTITPVAELEAVRLAGTTVKRSTLHNFDEIRRLDVRIGDRVVIEKSGEIIPKVIRVVPGTRREDSSEIAIPSHCPVCGTALLHPENEVSWYCPNSQSCPAQVKARILHFASRNAMDIKSLGESLVEQLVHNGLVADSGDLYRLTADEVSHLDRMADKSAMNLLKAIEKSRTREYERVLYALGIRHVGLATARELAAAYHSIDLLASAALEELSCVADIGPVIAQSVHDFFRNPDALALVEKLRTAGLRLAASAPKALVNRNFEGMKVIFTGTLERHSRDDAAALVAQRGGKEVKSLSRKTDLVVAGKDPGSKLQKALKLGVRVIGEEEFEAMLF.

NAD(+)-binding positions include Asp34–Asp38, Ser83–Leu84, and Glu117. Residue Lys119 is the N6-AMP-lysine intermediate of the active site. Residues Arg140, Glu184, Lys297, and Lys321 each coordinate NAD(+). Cys415, Cys418, Cys433, and Cys439 together coordinate Zn(2+). Residues Leu598 to Phe675 enclose the BRCT domain.

Belongs to the NAD-dependent DNA ligase family. LigA subfamily. Mg(2+) is required as a cofactor. Mn(2+) serves as cofactor.

It catalyses the reaction NAD(+) + (deoxyribonucleotide)n-3'-hydroxyl + 5'-phospho-(deoxyribonucleotide)m = (deoxyribonucleotide)n+m + AMP + beta-nicotinamide D-nucleotide.. Its function is as follows. DNA ligase that catalyzes the formation of phosphodiester linkages between 5'-phosphoryl and 3'-hydroxyl groups in double-stranded DNA using NAD as a coenzyme and as the energy source for the reaction. It is essential for DNA replication and repair of damaged DNA. The protein is DNA ligase of Prosthecochloris aestuarii (strain DSM 271 / SK 413).